A 250-amino-acid polypeptide reads, in one-letter code: Malonyl-[acyl-carrier protein] O-methyltransferase (250 aa).

The protein belongs to the methyltransferase superfamily.

The enzyme catalyses malonyl-[ACP] + S-adenosyl-L-methionine = malonyl-[ACP] methyl ester + S-adenosyl-L-homocysteine. Its pathway is cofactor biosynthesis; biotin biosynthesis. Its function is as follows. Converts the free carboxyl group of a malonyl-thioester to its methyl ester by transfer of a methyl group from S-adenosyl-L-methionine (SAM). It allows to synthesize pimeloyl-ACP via the fatty acid synthetic pathway. The chain is Malonyl-[acyl-carrier protein] O-methyltransferase from Neorickettsia risticii (strain Illinois).